A 579-amino-acid polypeptide reads, in one-letter code: Alpha-longipinene synthase (579 aa).

Mg(2+) contacts are provided by aspartate 332, aspartate 336, aspartate 476, and asparagine 484. The DDXXD motif motif lies at 332–336 (DDLYD).

This sequence belongs to the terpene synthase family. Tpsd subfamily. Requires Mg(2+) as cofactor. Mn(2+) is required as a cofactor.

It carries out the reaction (2E,6E)-farnesyl diphosphate = alpha-longipinene + diphosphate. The protein operates within sesquiterpene biosynthesis. Its pathway is terpene metabolism; oleoresin biosynthesis. Its function is as follows. Terpene synthase (TPS) involved in the biosynthesis of sesquiterpene natural products included in conifer oleoresin secretions and volatile emissions; these compounds contribute to biotic and abiotic stress defense against herbivores and pathogens. Catalyzes the conversion of (2E,6E)-farnesyl diphosphate (FPP) to alpha-longipinene. The chain is Alpha-longipinene synthase from Picea sitchensis (Sitka spruce).